The primary structure comprises 579 residues: Folliculin (579 aa).

The tract at residues 30 to 81 (PQGDGNEDSPGQGEQAEEEEGGIQMNSRMRAHSPAEGASVESSSPGPKKSDM) is disordered. Residues Ser-62 and Ser-73 each carry the phosphoserine modification. The 157-residue stretch at 86-242 (RSLAAGHPGY…RNGNAARSLT (157 aa)) folds into the uDENN FLCN/SMCR8-type domain. The interval 210 to 220 (AEQFGCPQRAQ) is essential for interaction with LDHA. Residues 287-310 (EKLADLEEESESWDNSEAEEEEKA) are a coiled coil. Residues 294 to 308 (EESESWDNSEAEEEE) show a composition bias toward acidic residues. Residues 294–337 (EESESWDNSEAEEEEKAPVLPESTEGRELTQGPAESSSLSGCGS) form a disordered region. Ser-302 carries the phosphoserine modification. The span at 326–336 (PAESSSLSGCG) shows a compositional bias: polar residues. A cDENN FLCN/SMCR8-type domain is found at 339–491 (QPRKLPVFKS…ILNKIEAALT (153 aa)). A phosphoserine; by ULK1 mark is found at Ser-406, Ser-537, and Ser-542. Residues 493–558 (QNLSVDVVDQ…LLKFWMTGLS (66 aa)) enclose the dDENN FLCN/SMCR8-type domain. Residue Ser-571 is modified to Phosphoserine.

The protein belongs to the folliculin family. Interacts (via C-terminus) with FNIP1 or FNIP2 (via C-terminus). Component of the lysosomal folliculin complex (LFC), composed of FLCN, FNIP1 (or FNIP2), RagA/RRAGA or RagB/RRAGB GDP-bound, RagC/RRAGC or RagD/RRAGD GTP-bound, and Ragulator. Interaction with FNIP1 or FNIP2 mediates indirect interaction with the PRKAA1, PRKAB1 and PRKAG1 subunits of 5'-AMP-activated protein kinase (AMPK). Interacts with HSP90AA1 in the presence of FNIP1. Interacts with HSP70, STUB1, CDC37, AHSA1, CCT2, STIP1, PTGES3 and PPP5C. Interacts with GABARAP; interaction takes place in the presence of FNIP1 and/or FNIP2. Interacts with RILP; the interaction is direct and promotes association between RILP and RAB34. Interacts with KIF3A and KIF3B. Interacts with lactate dehydrogenase LDHA, but not LDHB; the interaction is direct, may preferentially bind LDHA dimers rather than tetramers, and regulates LDHA activity, acting as an uncompetitive inhibitor. In terms of processing, phosphorylation by ULK1 modulates the interaction with GABARAP and is required to regulate autophagy. Expressed in most tissues tested, including skin, lung, kidney, heart, testis and stomach.

It localises to the lysosome membrane. The protein resides in the cytoplasm. It is found in the cytosol. The protein localises to the cell projection. Its subcellular location is the cilium. It localises to the cytoskeleton. The protein resides in the microtubule organizing center. It is found in the centrosome. The protein localises to the spindle. Its subcellular location is the nucleus. With respect to regulation, GTPase-activating activity is inhibited in the folliculin complex (LFC), which stabilizes the GDP-bound state of RagA/RRAGA (or RagB/RRAGB), because Arg-164 is located far from the RagC/RRAGC or RagD/RRAGD nucleotide pocket. Disassembly of the LFC complex upon amino acid restimulation liberates the GTPase-activating activity. Functionally, multi-functional protein, involved in both the cellular response to amino acid availability and in the regulation of glycolysis. GTPase-activating protein that plays a key role in the cellular response to amino acid availability through regulation of the non-canonical mTORC1 signaling cascade controlling the MiT/TFE factors TFEB and TFE3. Activates mTORC1 by acting as a GTPase-activating protein: specifically stimulates GTP hydrolysis by RagC/RRAGC or RagD/RRAGD, promoting the conversion to the GDP-bound state of RagC/RRAGC or RagD/RRAGD, and thereby activating the kinase activity of mTORC1. The GTPase-activating activity is inhibited during starvation and activated in presence of nutrients. Acts as a key component for non-canonical mTORC1-dependent control of the MiT/TFE factors TFEB and TFE3, while it is not involved in mTORC1-dependent phosphorylation of canonical RPS6KB1/S6K1 and EIF4EBP1/4E-BP1. In low-amino acid conditions, the lysosomal folliculin complex (LFC) is formed on the membrane of lysosomes, which inhibits the GTPase-activating activity of FLCN, inactivates mTORC1 and maximizes nuclear translocation of TFEB and TFE3. Upon amino acid restimulation, RagA/RRAGA (or RagB/RRAGB) nucleotide exchange promotes disassembly of the LFC complex and liberates the GTPase-activating activity of FLCN, leading to activation of mTORC1 and subsequent cytoplasmic retention of TFEB and TFE3. Indirectly acts as a positive regulator of Wnt signaling by promoting mTOR-dependent cytoplasmic retention of MiT/TFE factor TFE3. Required for the exit of hematopoietic stem cell from pluripotency by promoting mTOR-dependent cytoplasmic retention of TFE3, thereby increasing Wnt signaling. Acts as an inhibitor of browning of adipose tissue by regulating mTOR-dependent cytoplasmic retention of TFE3. Involved in the control of embryonic stem cells differentiation; together with LAMTOR1 it is necessary to recruit and activate RagC/RRAGC and RagD/RRAGD at the lysosomes, and to induce exit of embryonic stem cells from pluripotency via non-canonical, mTOR-independent TFE3 inactivation. In response to flow stress, regulates STK11/LKB1 accumulation and mTORC1 activation through primary cilia: may act by recruiting STK11/LKB1 to primary cilia for activation of AMPK resided at basal bodies, causing mTORC1 down-regulation. Together with FNIP1 and/or FNIP2, regulates autophagy: following phosphorylation by ULK1, interacts with GABARAP and promotes autophagy. Required for starvation-induced perinuclear clustering of lysosomes by promoting association of RILP with its effector RAB34. Regulates glycolysis by binding to lactate dehydrogenase LDHA, acting as an uncompetitive inhibitor. In Homo sapiens (Human), this protein is Folliculin.